The primary structure comprises 98 residues: NADH-ubiquinone oxidoreductase chain 4L (98 aa).

Transmembrane regions (helical) follow at residues 2-22 (SPIYINLMMAFIFSLLGTLLF), 26-46 (LMSTLLCLEGMMLSLFIMVTS), and 61-81 (ITMLVFGACEAAIGLALLVMI).

Belongs to the complex I subunit 4L family. As to quaternary structure, core subunit of respiratory chain NADH dehydrogenase (Complex I) which is composed of 45 different subunits.

Its subcellular location is the mitochondrion inner membrane. The catalysed reaction is a ubiquinone + NADH + 5 H(+)(in) = a ubiquinol + NAD(+) + 4 H(+)(out). Its function is as follows. Core subunit of the mitochondrial membrane respiratory chain NADH dehydrogenase (Complex I) which catalyzes electron transfer from NADH through the respiratory chain, using ubiquinone as an electron acceptor. Part of the enzyme membrane arm which is embedded in the lipid bilayer and involved in proton translocation. This chain is NADH-ubiquinone oxidoreductase chain 4L (MT-ND4L), found in Nephelomys albigularis (Tomes's rice rat).